Reading from the N-terminus, the 81-residue chain is Trefoil factor 3 (81 aa).

An N-terminal signal peptide occupies residues 1–23; it reads MEARTFWLLVVAVLALGSSSSTG. The 44-residue stretch at 31–74 folds into the P-type domain; sequence NQCAVPAKDRVDCGYPEVTPEQCNNRGCCFDSSIHGVPWCFKPL. Cystine bridges form between cysteine 33–cysteine 59, cysteine 43–cysteine 58, and cysteine 53–cysteine 70.

As to quaternary structure, monomer. Homodimer; disulfide-linked.

It is found in the secreted. It localises to the extracellular space. The protein localises to the extracellular matrix. The protein resides in the cytoplasm. In terms of biological role, involved in the maintenance and repair of the intestinal mucosa. Promotes the mobility of epithelial cells in healing processes (motogen). The chain is Trefoil factor 3 (TFF3) from Bos taurus (Bovine).